Reading from the N-terminus, the 302-residue chain is Bifunctional protein FolD 2 (302 aa).

NADP(+) is bound by residues 170–172 (GRS), serine 195, and isoleucine 236.

Belongs to the tetrahydrofolate dehydrogenase/cyclohydrolase family. In terms of assembly, homodimer.

It carries out the reaction (6R)-5,10-methylene-5,6,7,8-tetrahydrofolate + NADP(+) = (6R)-5,10-methenyltetrahydrofolate + NADPH. The enzyme catalyses (6R)-5,10-methenyltetrahydrofolate + H2O = (6R)-10-formyltetrahydrofolate + H(+). It functions in the pathway one-carbon metabolism; tetrahydrofolate interconversion. In terms of biological role, catalyzes the oxidation of 5,10-methylenetetrahydrofolate to 5,10-methenyltetrahydrofolate and then the hydrolysis of 5,10-methenyltetrahydrofolate to 10-formyltetrahydrofolate. The chain is Bifunctional protein FolD 2 from Paracoccus denitrificans (strain Pd 1222).